Reading from the N-terminus, the 552-residue chain is MSFDGFFLHHMTAELRANLEGGRIQKINQPFEQEIVLNIRSNRQSHKLLLSAHSVFGRVQLTQSDFTNPKVPNTFTMILRKYLQGAIIEEIRQLDNDRILEFSVSNKDEIGDHIQATLIVEIMGKHSNIILVDKSEQKIIEAIKHVGFSQNSYRTILPGSTYIRPPETHSLNPYTVSDEKLFEILSTQELSPKNLQQVFQGLGRDTASELANHLQIDRLKNFRAFFDQATQPSLTDKSYAALPFANSPENQPHFESLSSLLDFYYQDKAERDRVAQQANELIKRVASELEKNRKKLIKQEQELADTETAELVRQKGELLTTYLHQVPNDQSSVRLDNYYTGKELEIELDVALTPSQNAQRYFKKYQKLKEAVKHLTNLIEETKSTIVYLESVDTMLGQASLAEIDEIREELIETGYLKRRHREKIHKRQKPERYLATDGKTIILVGKNNLQNDELTFKMAKKGELWFHAKDIPGSHVVITDNLDPSDEVKTDAAELAAYFSKARHSNLVQVDMIEAKKLHKPTGGKPGFVTYRGQKTLRVTPTEDKIKSMKI.

Coiled coils occupy residues 271 to 317 (RDRV…QKGE) and 357 to 398 (NAQR…MLGQ).

This sequence belongs to the NEMF family. As to quaternary structure, associates with stalled 50S ribosomal subunits, binds to RqcH. Recombinant protein interacts with the N-terminal 30 kDa of human fibronectin (FN1).

In terms of biological role, key component of the ribosome quality control system (RQC), a ribosome-associated complex that mediates the extraction of incompletely synthesized nascent chains from stalled ribosomes and their subsequent degradation. RqcH recruits Ala-charged tRNA, and with RqcP directs the elongation of stalled nascent chains on 50S ribosomal subunits, leading to non-templated C-terminal alanine extensions (Ala tail). The Ala tail promotes nascent chain degradation. May add between 1 and at least 8 Ala residues. Binds to stalled 50S ribosomal subunits. The sequence is that of Rqc2 homolog RqcH from Streptococcus suis (strain 05ZYH33).